A 388-amino-acid polypeptide reads, in one-letter code: Chalcone synthase D (388 aa).

Cys-164 is an active-site residue.

This sequence belongs to the thiolase-like superfamily. Chalcone/stilbene synthases family.

It catalyses the reaction (E)-4-coumaroyl-CoA + 3 malonyl-CoA + 3 H(+) = 2',4,4',6'-tetrahydroxychalcone + 3 CO2 + 4 CoA. Its pathway is secondary metabolite biosynthesis; flavonoid biosynthesis. In terms of biological role, the primary product of this enzyme is 4,2',4',6'-tetrahydroxychalcone (also termed naringenin-chalcone or chalcone) which can under specific conditions spontaneously isomerize into naringenin. In Ipomoea nil (Japanese morning glory), this protein is Chalcone synthase D (CHSD).